The chain runs to 170 residues: Probable calcium-binding protein CML27 (170 aa).

An N-acetylalanine modification is found at alanine 2. 4 EF-hand domains span residues 19-54 (ANPE…MGTS), 55-85 (YTET…TLCR), 88-123 (SSAA…LGMS), and 136-159 (VDAD…SSLL). Aspartate 32, asparagine 34, aspartate 36, lysine 38, glutamate 43, aspartate 68, aspartate 70, aspartate 72, tyrosine 74, glutamate 79, aspartate 101, aspartate 103, asparagine 105, glutamate 112, aspartate 137, aspartate 139, aspartate 141, asparagine 143, and glutamate 148 together coordinate Ca(2+).

In terms of biological role, potential calcium sensor. The protein is Probable calcium-binding protein CML27 (CML27) of Arabidopsis thaliana (Mouse-ear cress).